The chain runs to 186 residues: UPF0301 protein HI_0304 (186 aa).

This sequence belongs to the UPF0301 (AlgH) family.

This chain is UPF0301 protein HI_0304, found in Haemophilus influenzae (strain ATCC 51907 / DSM 11121 / KW20 / Rd).